We begin with the raw amino-acid sequence, 352 residues long: Cell division protein ZipA (352 aa).

Residues Met1 to Arg5 are Periplasmic-facing. Residues Leu6 to Thr26 traverse the membrane as a helical segment. The Cytoplasmic portion of the chain corresponds to Ser27–Ala352. The span at Phe35–Asp54 shows a compositional bias: basic and acidic residues. Residues Phe35–Thr56 form a disordered region.

The protein belongs to the ZipA family. As to quaternary structure, interacts with FtsZ via their C-terminal domains.

It is found in the cell inner membrane. Its function is as follows. Essential cell division protein that stabilizes the FtsZ protofilaments by cross-linking them and that serves as a cytoplasmic membrane anchor for the Z ring. Also required for the recruitment to the septal ring of downstream cell division proteins. This Photobacterium profundum (strain SS9) protein is Cell division protein ZipA.